The primary structure comprises 304 residues: Arginine-binding protein ArgT (304 aa).

Positions 1-26 (MRFPKIPKRAVAATVGIVATSFTLAS) are cleaved as a signal peptide. The N-palmitoyl cysteine moiety is linked to residue Cys27. Cys27 carries S-diacylglycerol cysteine lipidation.

The protein belongs to the bacterial solute-binding protein 3 family. The complex is probably composed of two ATP-binding proteins (ArgV), two transmembrane proteins (ArgU) and a solute-binding protein (ArgT).

The protein resides in the cell membrane. Its function is as follows. Part of the ABC transporter complex ArgTUV involved in L-arginine import. May also transport L-citrulline. Binds L-arginine and its molecular precursor L-citrulline, but not L-histidine, L-glutamate, L-glutamine, L-lysine or L-cysteine. This chain is Arginine-binding protein ArgT, found in Corynebacterium glutamicum (strain ATCC 13032 / DSM 20300 / JCM 1318 / BCRC 11384 / CCUG 27702 / LMG 3730 / NBRC 12168 / NCIMB 10025 / NRRL B-2784 / 534).